Consider the following 363-residue polypeptide: Pyrimidine monooxygenase RutA (363 aa).

FMN contacts are provided by residues 49–50 (IK), Asn115, Glu124, 140–141 (RY), and Ser190.

It belongs to the NtaA/SnaA/DszA monooxygenase family. RutA subfamily.

It carries out the reaction uracil + FMNH2 + NADH + O2 = (Z)-3-ureidoacrylate + FMN + NAD(+) + H2O + H(+). It catalyses the reaction thymine + FMNH2 + NADH + O2 = (Z)-2-methylureidoacrylate + FMN + NAD(+) + H2O + H(+). In terms of biological role, catalyzes the pyrimidine ring opening between N-3 and C-4 by an unusual flavin hydroperoxide-catalyzed mechanism, adding oxygen atoms in the process to yield ureidoacrylate peracid, that immediately reacts with FMN forming ureidoacrylate and FMN-N(5)-oxide. The FMN-N(5)-oxide reacts spontaneously with NADH to produce FMN. Requires the flavin reductase RutF to regenerate FMN in vivo. The chain is Pyrimidine monooxygenase RutA from Escherichia coli O44:H18 (strain 042 / EAEC).